The chain runs to 1013 residues: Polyprotein of EF-Ts, chloroplastic (1013 aa).

Residues 1–43 constitute a chloroplast transit peptide; sequence MLRELGRTATVKAHGRSVLRPVRGPAGRRQVAFTGVRPSVRVF. Positions 64–133 constitute an S1 motif 1 domain; it reads GSEYEGTVTT…EKKRVSLELK (70 aa). Over residues 141–150 the composition is skewed to acidic residues; sequence SAEESDDIIT. The tract at residues 141-163 is disordered; it reads SAEESDDIITEPDREGADATDDD. Positions 227 to 331 constitute an S1 motif 2 domain; it reads MEEVTGKVAR…DGRGISLTHF (105 aa). A disordered region spans residues 772–798; the sequence is QAKAAAPAAPKKEEPKKEEPKKATVAV. The span at 781-793 shows a compositional bias: basic and acidic residues; it reads PKKEEPKKEEPKK.

This sequence belongs to the EF-Ts family. As to quaternary structure, component of the chloroplast ribosome 30S and 70S subunits, as well as polysomes. Component of the chloroplast ribosome 70S subunit, and at low levels, present in polysomes. In terms of assembly, associates transiently with chloroplast polysomes.

Its subcellular location is the plastid. The protein resides in the chloroplast. In terms of biological role, associates with the EF-Tu.GDP complex and induces the exchange of GDP to GTP. It remains bound to the aminoacyl-tRNA.EF-Tu.GTP complex up to the GTP hydrolysis stage on the ribosome. Functionally, binds to psbD and psbA mRNAs 5'-untranslated regions (UTRs) in vitro. The protein is Polyprotein of EF-Ts, chloroplastic of Chlamydomonas reinhardtii (Chlamydomonas smithii).